A 599-amino-acid polypeptide reads, in one-letter code: Ecdysone oxidase (599 aa).

Residues N137–V140 and W537–H538 each bind FAD. Catalysis depends on H538, which acts as the Proton acceptor.

Belongs to the GMC oxidoreductase family. The cofactor is FAD.

The enzyme catalyses ecdysone + O2 = 3-dehydroecdysone + H2O2. In terms of biological role, involved in the inactivation of ecdysteroid molting hormones by converting ecdysteroids into 3-dehydroecdysteroids. The protein is Ecdysone oxidase of Spodoptera littoralis (Egyptian cotton leafworm).